A 406-amino-acid chain; its full sequence is B3 domain-containing protein Os11g0197600 (406 aa).

The tract at residues 1–20 is disordered; it reads MVVREKQGGRMGKGKGKGKE. The segment at residues 30–123 is a DNA-binding region (TF-B3 1); that stretch reads RSFFRVLLTL…QFSVTVFEPS (94 aa). The segment at 199–245 is disordered; that stretch reads ESSRRKRAGASAGKSKVTSTSHNSTRGSSCSSDEDNSSSKSPNPPFL. Polar residues predominate over residues 214–225; sequence KVTSTSHNSTRG. The TF-B3 2 DNA-binding region spans 298–393; it reads AVQIMMESYV…NIKVHIYRVV (96 aa).

It localises to the nucleus. This chain is B3 domain-containing protein Os11g0197600, found in Oryza sativa subsp. japonica (Rice).